Consider the following 493-residue polypeptide: Probable cytosol aminopeptidase (493 aa).

Residues lysine 257 and aspartate 262 each contribute to the Mn(2+) site. Lysine 269 is a catalytic residue. Residues aspartate 281, aspartate 341, and glutamate 343 each coordinate Mn(2+). The active site involves arginine 345.

The protein belongs to the peptidase M17 family. Mn(2+) serves as cofactor.

Its subcellular location is the cytoplasm. It catalyses the reaction Release of an N-terminal amino acid, Xaa-|-Yaa-, in which Xaa is preferably Leu, but may be other amino acids including Pro although not Arg or Lys, and Yaa may be Pro. Amino acid amides and methyl esters are also readily hydrolyzed, but rates on arylamides are exceedingly low.. The enzyme catalyses Release of an N-terminal amino acid, preferentially leucine, but not glutamic or aspartic acids.. Presumably involved in the processing and regular turnover of intracellular proteins. Catalyzes the removal of unsubstituted N-terminal amino acids from various peptides. This chain is Probable cytosol aminopeptidase, found in Prochlorococcus marinus (strain MIT 9211).